A 122-amino-acid chain; its full sequence is Basic phospholipase A2 homolog (122 aa).

Intrachain disulfides connect C26-C116, C28-C44, C43-C96, C49-C122, C50-C89, C57-C82, and C75-C87. The segment at K106–K117 is important for membrane-damaging activities in eukaryotes and bacteria; heparin-binding.

This sequence belongs to the phospholipase A2 family. Group II subfamily. K49 sub-subfamily. Homodimer; non-covalently linked. Expressed by the venom gland.

The protein localises to the secreted. In terms of biological role, snake venom phospholipase A2 (PLA2) that has almost no phospholipase A2 activity. Is myotoxic. Displays edema-inducing activities. A model of myotoxic mechanism has been proposed: an apo Lys49-PLA2 is activated by the entrance of a hydrophobic molecule (e.g. fatty acid) at the hydrophobic channel of the protein leading to a reorientation of a monomer. This reorientation causes a transition between 'inactive' to 'active' states, causing alignment of C-terminal and membrane-docking sites (MDoS) side-by-side and putting the membrane-disruption sites (MDiS) in the same plane, exposed to solvent and in a symmetric position for both monomers. The MDoS region stabilizes the toxin on membrane by the interaction of charged residues with phospholipid head groups. Subsequently, the MDiS region destabilizes the membrane with penetration of hydrophobic residues. This insertion causes a disorganization of the membrane, allowing an uncontrolled influx of ions (i.e. calcium and sodium), and eventually triggering irreversible intracellular alterations and cell death. The sequence is that of Basic phospholipase A2 homolog from Protobothrops mucrosquamatus (Taiwan habu).